The following is a 284-amino-acid chain: 4-diphosphocytidyl-2-C-methyl-D-erythritol kinase (284 aa).

Lysine 17 is a catalytic residue. Position 100–110 (100–110) interacts with ATP; that stretch reads PMGGGLGGGSS. Residue aspartate 142 is part of the active site.

The protein belongs to the GHMP kinase family. IspE subfamily.

It carries out the reaction 4-CDP-2-C-methyl-D-erythritol + ATP = 4-CDP-2-C-methyl-D-erythritol 2-phosphate + ADP + H(+). The protein operates within isoprenoid biosynthesis; isopentenyl diphosphate biosynthesis via DXP pathway; isopentenyl diphosphate from 1-deoxy-D-xylulose 5-phosphate: step 3/6. Functionally, catalyzes the phosphorylation of the position 2 hydroxy group of 4-diphosphocytidyl-2C-methyl-D-erythritol. In Aromatoleum aromaticum (strain DSM 19018 / LMG 30748 / EbN1) (Azoarcus sp. (strain EbN1)), this protein is 4-diphosphocytidyl-2-C-methyl-D-erythritol kinase.